A 603-amino-acid polypeptide reads, in one-letter code: UvrABC system protein C (603 aa).

The GIY-YIG domain maps to 15–92; it reads DQPGCYLMKD…IKKHDPRFNI (78 aa). The 36-residue stretch at 197 to 232 folds into the UVR domain; sequence KTVKNDLMKKMQEAAENMEFEKAGEFRDQINAIETT.

The protein belongs to the UvrC family. As to quaternary structure, interacts with UvrB in an incision complex.

It localises to the cytoplasm. The UvrABC repair system catalyzes the recognition and processing of DNA lesions. UvrC both incises the 5' and 3' sides of the lesion. The N-terminal half is responsible for the 3' incision and the C-terminal half is responsible for the 5' incision. The polypeptide is UvrABC system protein C (Listeria monocytogenes serovar 1/2a (strain ATCC BAA-679 / EGD-e)).